Here is a 703-residue protein sequence, read N- to C-terminus: MSARATRPRSRRGRHAPPGELDPVAESSEEVEAASGSSKPSFAPPPVSSGLEQLGPMEEVSGQGLGSRTDKKMDGGSGRELASAPEVPHKPAVEAHQAPEAALQYKETVPPGNGAPDVFQTLQHTLSSLEAAAAAWRHQPPSHSGPMEFEGTSEGGAGSLGKQEGAGSCQREAARLAERNAWLRLALSSREDELVRTQASLEAIRAEKETLQKEVQELQDSLLRLEPCPHLSHNQAGGSGSGSSSSEADREPWETQDSFSLAHPLLRRLRSHSSTQILGSLPNQPLSPEMHIMEAQMEQLRGSIEKLKCFNRLLSAVLQGYKGRCEGLSMQLGQREAEATALHLALQYSEHCEEAYRVLLALREADSGAGDEAPMSDLQAAEKEAWRLLAQEEAAMDAGAQQNPQPSPEGSSVDKPTPQEVAFQLRSYVQRLQERRSLMKILSEPGPTLAPMPTVPRAEAMVQAILGTQAGPALPRLEKTQIQQDLVAAREALADLMLRLQLVRREKRGLELREAALRALGPAHVLLLEQLRWERAELQAGGANSSGGHSSGGGSSGDEEEWYQGLPAVPGGTSGIDGGQVGRAWDPEKLAQELAASLTRTLDLQEQLQSLRRELEQVAQKGRARRSQSAELNRDLCKAHSALVLAFRGAHRKQEEQRRKLEQQMALMEAQQAEEVAVLEATARALGKPRPPLPPPQLGDTFL.

Over residues 1–15 (MSARATRPRSRRGRH) the composition is skewed to basic residues. Disordered regions lie at residues 1–113 (MSAR…PPGN) and 138–172 (HQPP…CQRE). A coiled-coil region spans residues 189-227 (SREDELVRTQASLEAIRAEKETLQKEVQELQDSLLRLEP). Residues 228–256 (CPHLSHNQAGGSGSGSSSSEADREPWETQ) form a disordered region. A coiled-coil region spans residues 289–309 (EMHIMEAQMEQLRGSIEKLKC). The segment at 396–416 (MDAGAQQNPQPSPEGSSVDKP) is disordered. Residues 400–410 (AQQNPQPSPEG) show a composition bias toward polar residues. Positions 476-513 (RLEKTQIQQDLVAAREALADLMLRLQLVRREKRGLELR) form a coiled coil. The interval 540–583 (AGGANSSGGHSSGGGSSGDEEEWYQGLPAVPGGTSGIDGGQVGR) is disordered. Positions 572–581 (GTSGIDGGQV) are enriched in gly residues. Residues 596–681 (ASLTRTLDLQ…QAEEVAVLEA (86 aa)) are a coiled coil.

It belongs to the MCC family. Interacts via its C-terminus with the first PDZ domain of USH1C. Highest level of expression in heart, and moderate to low expression in skeletal muscle, kidney, liver, small intestine, placenta and lung.

The sequence is that of Harmonin-binding protein USHBP1 from Homo sapiens (Human).